Reading from the N-terminus, the 180-residue chain is MIKKIGERKISFSGWSNGRSGSNDFREMYGSDACECISSNDQYTFVFSQVRTLDLIELEQLLQSVGWSRRPIRRVKKALDNSLLKVGVWQHDPKFPRLIGFARCTGDEVIQATIWDVAIHPVYQGFGLGKELMSYVLRSLKDKGIERVVLFADPGVISFYQSQGWTLEPKGNRCAFWYAN.

Residues 45–180 (FVFSQVRTLD…GNRCAFWYAN (136 aa)) form the N-acetyltransferase domain.

It belongs to the acetyltransferase family. Ycf52 subfamily.

This is an uncharacterized protein from Prochlorococcus marinus (strain SARG / CCMP1375 / SS120).